The sequence spans 75 residues: Pi-hexatoxin-Hi1d (75 aa).

Cystine bridges form between Cys3–Cys18, Cys10–Cys23, Cys17–Cys33, Cys40–Cys55, Cys47–Cys60, and Cys54–Cys71. Domain repeat units lie at residues 3–33 (CIRKWLSCVDRKNDCCEGLECYKRRHSFEVC) and 40–71 (CLVKWKQCDGRERDCCAGLECWKRSGNKSSVC). The segment at 3–71 (CIRKWLSCVD…KRSGNKSSVC (69 aa)) is 2 X approximate repeats with cysteine pattern C-C-CC-C-C.

It belongs to the psalmotoxin-1 family. Double-knot toxin subfamily. Expressed by the venom gland.

The protein resides in the secreted. This toxin potently and selectively inhibits ASIC1a, an isoform of the gene ASIC1. It incompletely inhibits ASIC1a activation in a pH-independent and slowly reversible manner. This toxin acts by binding to and stabilizing the closed state of the channel, thereby impeding the transition into a conducting state. This toxin may bind to the acidic pocket of ASIC1a, since mutation of a key residue of this pocket (Arg-350) abolishes the ability of the toxin to inhibit ASIC1a. In vivo, this toxin protects the brain from neuronal injury when administered up to 8 hours after stroke onset. This is Pi-hexatoxin-Hi1d from Hadronyche infensa (Fraser island funnel-web spider).